Here is a 447-residue protein sequence, read N- to C-terminus: uncharacterized protein (447 aa).

Belongs to the class-II fumarase/aspartase family.

It is found in the cytoplasm. Its subcellular location is the nucleus. This is an uncharacterized protein from Schizosaccharomyces pombe (strain 972 / ATCC 24843) (Fission yeast).